A 150-amino-acid polypeptide reads, in one-letter code: MQIILLEKVLNVGNLGDIVKVKDGYARNFLIPNKKARRATKEAIAEFEVRRAELEKVAAEKLSAAQAQGEKLSGMTVQIAQKAGVDGRLFGSVTNADIAAALGKQGFEVEKAQVRLPEGPLKMVGDHPVHVSLHTDVTVDVTVSVLGEHV.

This sequence belongs to the bacterial ribosomal protein bL9 family.

In terms of biological role, binds to the 23S rRNA. The sequence is that of Large ribosomal subunit protein bL9 from Paraburkholderia phymatum (strain DSM 17167 / CIP 108236 / LMG 21445 / STM815) (Burkholderia phymatum).